Here is a 373-residue protein sequence, read N- to C-terminus: 4-hydroxy-3-methylbut-2-en-1-yl diphosphate synthase (flavodoxin) (373 aa).

4 residues coordinate [4Fe-4S] cluster: Cys270, Cys273, Cys305, and Glu312.

This sequence belongs to the IspG family. The cofactor is [4Fe-4S] cluster.

It catalyses the reaction (2E)-4-hydroxy-3-methylbut-2-enyl diphosphate + oxidized [flavodoxin] + H2O + 2 H(+) = 2-C-methyl-D-erythritol 2,4-cyclic diphosphate + reduced [flavodoxin]. Its pathway is isoprenoid biosynthesis; isopentenyl diphosphate biosynthesis via DXP pathway; isopentenyl diphosphate from 1-deoxy-D-xylulose 5-phosphate: step 5/6. In terms of biological role, converts 2C-methyl-D-erythritol 2,4-cyclodiphosphate (ME-2,4cPP) into 1-hydroxy-2-methyl-2-(E)-butenyl 4-diphosphate. This Pectobacterium atrosepticum (strain SCRI 1043 / ATCC BAA-672) (Erwinia carotovora subsp. atroseptica) protein is 4-hydroxy-3-methylbut-2-en-1-yl diphosphate synthase (flavodoxin).